We begin with the raw amino-acid sequence, 510 residues long: NAD(P)H-quinone oxidoreductase subunit 2 B, chloroplastic (510 aa).

13 helical membrane-spanning segments follow: residues 24–44 (LLLF…GLIL), 57–77 (LPWF…ALLF), 99–119 (IFQF…VEYI), 124–144 (MAIT…MFLC), 149–169 (LITI…LSGY), 183–203 (YLLM…WLYG), 227–247 (PGIS…LSPA), 295–315 (WHLL…IIAI), 323–343 (MLAY…IVGD), 354–374 (YMLF…LFGL), 395–415 (ALSL…AGFF), 428–448 (GLYS…YYYL), and 484–504 (MIVC…IIAI).

This sequence belongs to the complex I subunit 2 family. In terms of assembly, NDH is composed of at least 16 different subunits, 5 of which are encoded in the nucleus.

It localises to the plastid. The protein resides in the chloroplast thylakoid membrane. It catalyses the reaction a plastoquinone + NADH + (n+1) H(+)(in) = a plastoquinol + NAD(+) + n H(+)(out). It carries out the reaction a plastoquinone + NADPH + (n+1) H(+)(in) = a plastoquinol + NADP(+) + n H(+)(out). NDH shuttles electrons from NAD(P)H:plastoquinone, via FMN and iron-sulfur (Fe-S) centers, to quinones in the photosynthetic chain and possibly in a chloroplast respiratory chain. The immediate electron acceptor for the enzyme in this species is believed to be plastoquinone. Couples the redox reaction to proton translocation, and thus conserves the redox energy in a proton gradient. This is NAD(P)H-quinone oxidoreductase subunit 2 B, chloroplastic from Jasminum nudiflorum (Winter jasmine).